Here is a 64-residue protein sequence, read N- to C-terminus: Translational regulator CsrA (64 aa).

The protein belongs to the CsrA/RsmA family. In terms of assembly, homodimer; the beta-strands of each monomer intercalate to form a hydrophobic core, while the alpha-helices form wings that extend away from the core.

It localises to the cytoplasm. In terms of biological role, a key translational regulator that binds mRNA to regulate translation initiation and/or mRNA stability. Mediates global changes in gene expression, shifting from rapid growth to stress survival by linking envelope stress, the stringent response and the catabolite repression systems. Usually binds in the 5'-UTR; binding at or near the Shine-Dalgarno sequence prevents ribosome-binding, repressing translation, binding elsewhere in the 5'-UTR can activate translation and/or stabilize the mRNA. Its function is antagonized by small RNA(s). The chain is Translational regulator CsrA from Thioalkalivibrio sulfidiphilus (strain HL-EbGR7).